The sequence spans 126 residues: Fluoride-specific ion channel FluC (126 aa).

Transmembrane regions (helical) follow at residues Phe6–Leu26, Tyr36–Phe56, Leu69–Val89, and Trp99–Leu119. 2 residues coordinate Na(+): Gly76 and Thr79.

The protein belongs to the fluoride channel Fluc/FEX (TC 1.A.43) family.

The protein localises to the cell inner membrane. It catalyses the reaction fluoride(in) = fluoride(out). With respect to regulation, na(+) is not transported, but it plays an essential structural role and its presence is essential for fluoride channel function. Functionally, fluoride-specific ion channel. Important for reducing fluoride concentration in the cell, thus reducing its toxicity. This Cupriavidus taiwanensis (strain DSM 17343 / BCRC 17206 / CCUG 44338 / CIP 107171 / LMG 19424 / R1) (Ralstonia taiwanensis (strain LMG 19424)) protein is Fluoride-specific ion channel FluC.